The primary structure comprises 657 residues: uncharacterized protein (657 aa).

Residues 1 to 17 (MACVLACVAVLIGAASA) form the signal peptide.

This is an uncharacterized protein from Orgyia pseudotsugata (Douglas-fir tussock moth).